The following is a 225-amino-acid chain: MGIRAIVVDTAGTTTDLNFIEDILFPYSAKVLPAFLEENQKNVLVENCICDVQDIALEPDADLARVTEILLQWIEEDRKATPLKTIQGLIWKQGYANGEFKGHIFPDFIEALDGYKQQGLRVYSFSSGSVDAQKLLFGNSDAGDLTDKFNGHFDTRTGNKRFKQAYCNILNTISLSPKQILFVSDVLEELKAASEAGLNVLQMVRQDNQRTGDFKQISSFAEIEL.

This sequence belongs to the HAD-like hydrolase superfamily. MasA/MtnC family. As to quaternary structure, monomer. Requires Mg(2+) as cofactor.

It catalyses the reaction 5-methylsulfanyl-2,3-dioxopentyl phosphate + H2O = 1,2-dihydroxy-5-(methylsulfanyl)pent-1-en-3-one + phosphate. It functions in the pathway amino-acid biosynthesis; L-methionine biosynthesis via salvage pathway; L-methionine from S-methyl-5-thio-alpha-D-ribose 1-phosphate: step 3/6. The protein operates within amino-acid biosynthesis; L-methionine biosynthesis via salvage pathway; L-methionine from S-methyl-5-thio-alpha-D-ribose 1-phosphate: step 4/6. Functionally, bifunctional enzyme that catalyzes the enolization of 2,3-diketo-5-methylthiopentyl-1-phosphate (DK-MTP-1-P) into the intermediate 2-hydroxy-3-keto-5-methylthiopentenyl-1-phosphate (HK-MTPenyl-1-P), which is then dephosphorylated to form the acireductone 1,2-dihydroxy-3-keto-5-methylthiopentene (DHK-MTPene). The sequence is that of Enolase-phosphatase E1 from Shewanella piezotolerans (strain WP3 / JCM 13877).